Reading from the N-terminus, the 287-residue chain is Protease HtpX (287 aa).

The next 2 helical transmembrane spans lie at 4 to 24 (IFLL…VMSI) and 33 to 53 (GGLL…SLAI). H139 is a binding site for Zn(2+). Residue E140 is part of the active site. H143 lines the Zn(2+) pocket. 2 helical membrane passes run 154-174 (LIQG…AGII) and 195-215 (AVVF…VAYF). A Zn(2+)-binding site is contributed by E220.

Belongs to the peptidase M48B family. Zn(2+) is required as a cofactor.

The protein localises to the cell inner membrane. This is Protease HtpX from Shewanella sp. (strain ANA-3).